The following is a 192-amino-acid chain: MYQDLIRNELNEAAETLANFLKDDANIHAIQRAAVLLADSFKAGGKVLSCGNGGSHCDAMHFAEELTGRYRENRPGYPAIAISDVSHISCVGNDFGFNDIFSRYVEAVGREGDVLLGISTSGNSANVIKAIAAAREKGMKVITLTGKDGGKMAGTADIEIRVPHFGYADRIQEIHIKVIHILIQLIEKEMVK.

Positions 37–192 constitute an SIS domain; that stretch reads LADSFKAGGK…IQLIEKEMVK (156 aa). 52 to 54 is a substrate binding site; sequence NGG. Zn(2+) is bound by residues histidine 61 and glutamate 65. Residues glutamate 65, 93 to 94, 119 to 121, serine 124, and glutamine 172 contribute to the substrate site; these read ND and STS. 2 residues coordinate Zn(2+): glutamine 172 and histidine 180.

Belongs to the SIS family. GmhA subfamily. Homotetramer. It depends on Zn(2+) as a cofactor.

The protein resides in the cytoplasm. The catalysed reaction is 2 D-sedoheptulose 7-phosphate = D-glycero-alpha-D-manno-heptose 7-phosphate + D-glycero-beta-D-manno-heptose 7-phosphate. It functions in the pathway carbohydrate biosynthesis; D-glycero-D-manno-heptose 7-phosphate biosynthesis; D-glycero-alpha-D-manno-heptose 7-phosphate and D-glycero-beta-D-manno-heptose 7-phosphate from sedoheptulose 7-phosphate: step 1/1. Functionally, catalyzes the isomerization of sedoheptulose 7-phosphate in D-glycero-D-manno-heptose 7-phosphate. This Escherichia coli O139:H28 (strain E24377A / ETEC) protein is Phosphoheptose isomerase.